Here is a 65-residue protein sequence, read N- to C-terminus: Large ribosomal subunit protein bL35 (65 aa).

Residues Met1–Arg45 show a composition bias toward basic residues. Residues Met1 to Thr65 are disordered. The segment covering Val48–Asp57 has biased composition (basic and acidic residues).

This sequence belongs to the bacterial ribosomal protein bL35 family.

The chain is Large ribosomal subunit protein bL35 from Salinibacter ruber (strain DSM 13855 / M31).